The following is a 120-amino-acid chain: NAD(P)H-quinone oxidoreductase subunit 3, chloroplastic (120 aa).

3 helical membrane passes run 9-29 (IFWAFLIISSVIPILAFLISG), 64-84 (MFALVFVVFDVETVFLYPWAM), and 88-108 (VLGLSVFIEALIFVLILIVGS).

This sequence belongs to the complex I subunit 3 family. NDH is composed of at least 16 different subunits, 5 of which are encoded in the nucleus.

It localises to the plastid. The protein resides in the chloroplast thylakoid membrane. The enzyme catalyses a plastoquinone + NADH + (n+1) H(+)(in) = a plastoquinol + NAD(+) + n H(+)(out). It catalyses the reaction a plastoquinone + NADPH + (n+1) H(+)(in) = a plastoquinol + NADP(+) + n H(+)(out). Its function is as follows. NDH shuttles electrons from NAD(P)H:plastoquinone, via FMN and iron-sulfur (Fe-S) centers, to quinones in the photosynthetic chain and possibly in a chloroplast respiratory chain. The immediate electron acceptor for the enzyme in this species is believed to be plastoquinone. Couples the redox reaction to proton translocation, and thus conserves the redox energy in a proton gradient. This is NAD(P)H-quinone oxidoreductase subunit 3, chloroplastic from Manihot esculenta (Cassava).